A 145-amino-acid chain; its full sequence is Large ribosomal subunit protein uL15 (145 aa).

The segment at 1–58 (MFSLLKPKGAAKRRKIVGRGPGSGLGKTSGRGQKGQKARNTSPRLGFEGGQTPLYRRL) is disordered. The span at 19 to 33 (RGPGSGLGKTSGRGQ) shows a compositional bias: gly residues.

This sequence belongs to the universal ribosomal protein uL15 family. As to quaternary structure, part of the 50S ribosomal subunit.

Its function is as follows. Binds to the 23S rRNA. This is Large ribosomal subunit protein uL15 from Borreliella afzelii (strain PKo) (Borrelia afzelii).